Reading from the N-terminus, the 130-residue chain is Protein ApaG (130 aa).

The ApaG domain maps to 3-127; sequence SQTTRDIEVT…FSLDSPHEKP (125 aa).

The polypeptide is Protein ApaG (Paramagnetospirillum magneticum (strain ATCC 700264 / AMB-1) (Magnetospirillum magneticum)).